The sequence spans 333 residues: Protein-methionine-sulfoxide reductase catalytic subunit MsrP (333 aa).

Positions 1 to 43 (MHKHRKPTEADVTPESLFYQRRRILKALGISAAALSLPFSAQA) form a signal peptide, tat-type signal. Residues Asn-87, 90–91 (YE), Cys-145, Thr-180, Asn-232, Arg-237, and 248–250 (NIK) each bind Mo-molybdopterin.

The protein belongs to the MsrP family. In terms of assembly, heterodimer of a catalytic subunit (MsrP) and a heme-binding subunit (MsrQ). It depends on Mo-molybdopterin as a cofactor. In terms of processing, predicted to be exported by the Tat system. The position of the signal peptide cleavage has not been experimentally proven.

It localises to the periplasm. It carries out the reaction L-methionyl-[protein] + a quinone + H2O = L-methionyl-(S)-S-oxide-[protein] + a quinol. The catalysed reaction is L-methionyl-[protein] + a quinone + H2O = L-methionyl-(R)-S-oxide-[protein] + a quinol. Part of the MsrPQ system that repairs oxidized periplasmic proteins containing methionine sulfoxide residues (Met-O), using respiratory chain electrons. Thus protects these proteins from oxidative-stress damage caused by reactive species of oxygen and chlorine generated by the host defense mechanisms. MsrPQ is essential for the maintenance of envelope integrity under bleach stress, rescuing a wide series of structurally unrelated periplasmic proteins from methionine oxidation. The catalytic subunit MsrP is non-stereospecific, being able to reduce both (R-) and (S-) diastereoisomers of methionine sulfoxide. The protein is Protein-methionine-sulfoxide reductase catalytic subunit MsrP of Pectobacterium carotovorum subsp. carotovorum (strain PC1).